The primary structure comprises 339 residues: DNA-directed RNA polymerase subunit alpha (339 aa).

Residues 1 to 233 are alpha N-terminal domain (alpha-NTD); that stretch reads MVREEVAGST…DLFLPFLHAE (233 aa). Positions 264-339 are alpha C-terminal domain (alpha-CTD); it reads KKGIPLNCIF…IDLLKNKLSF (76 aa).

It belongs to the RNA polymerase alpha chain family. In terms of assembly, in plastids the minimal PEP RNA polymerase catalytic core is composed of four subunits: alpha, beta, beta', and beta''. When a (nuclear-encoded) sigma factor is associated with the core the holoenzyme is formed, which can initiate transcription.

The protein localises to the plastid. It localises to the chloroplast. The catalysed reaction is RNA(n) + a ribonucleoside 5'-triphosphate = RNA(n+1) + diphosphate. DNA-dependent RNA polymerase catalyzes the transcription of DNA into RNA using the four ribonucleoside triphosphates as substrates. This is DNA-directed RNA polymerase subunit alpha from Agropyron cristatum (Crested wheatgrass).